The following is a 189-amino-acid chain: Histidinol-phosphate aminotransferase (189 aa).

It belongs to the class-II pyridoxal-phosphate-dependent aminotransferase family. Histidinol-phosphate aminotransferase subfamily. As to quaternary structure, homodimer. Requires pyridoxal 5'-phosphate as cofactor.

The enzyme catalyses L-histidinol phosphate + 2-oxoglutarate = 3-(imidazol-4-yl)-2-oxopropyl phosphate + L-glutamate. Its pathway is amino-acid biosynthesis; L-histidine biosynthesis; L-histidine from 5-phospho-alpha-D-ribose 1-diphosphate: step 7/9. The sequence is that of Histidinol-phosphate aminotransferase (hisC) from Thiocapsa roseopersicina.